We begin with the raw amino-acid sequence, 249 residues long: Pulmonary surfactant-associated protein A (249 aa).

Residues 1–20 form the signal peptide; the sequence is MLRWPLALTFLLLAVSGLEC. A Collagen-like domain is found at 28-100; that stretch reads ASPGIPGTPG…PGERGPPGLP (73 aa). Residues 29–102 are disordered; the sequence is SPGIPGTPGS…ERGPPGLPAH (74 aa). 8 positions are modified to 4-hydroxyproline: Pro-30, Pro-33, Pro-36, Pro-42, Pro-54, Pro-57, Pro-63, and Pro-70. Over residues 42-51 the composition is skewed to basic and acidic residues; it reads PGRDGRDGIK. The segment covering 84–93 has biased composition (basic and acidic residues); it reads ERGEKGEPGE. Residues 133–249 form the C-type lectin domain; it reads AVGEKVFSTN…QQYRLAICEF (117 aa). Disulfide bonds link Cys-155-Cys-247 and Cys-225-Cys-239. Asn-208 carries N-linked (GlcNAc...) asparagine glycosylation. 4 residues coordinate Ca(2+): Glu-216, Arg-218, Asn-235, and Asp-236.

The protein belongs to the SFTPA family. Oligomeric complex of 6 set of homotrimers.

It is found in the secreted. The protein localises to the extracellular space. The protein resides in the extracellular matrix. It localises to the surface film. Its function is as follows. In presence of calcium ions, it binds to surfactant phospholipids and contributes to lower the surface tension at the air-liquid interface in the alveoli of the mammalian lung and is essential for normal respiration. Enhances the expression of MYO18A/SP-R210 on alveolar macrophages. This Sus scrofa (Pig) protein is Pulmonary surfactant-associated protein A (SFTPA1).